A 66-amino-acid polypeptide reads, in one-letter code: Large ribosomal subunit protein bL33c (66 aa).

It belongs to the bacterial ribosomal protein bL33 family.

It localises to the plastid. Its subcellular location is the chloroplast. This is Large ribosomal subunit protein bL33c from Cucumis sativus (Cucumber).